A 316-amino-acid chain; its full sequence is Homoserine O-succinyltransferase (316 aa).

C142 acts as the Acyl-thioester intermediate in catalysis. Substrate-binding residues include K163 and S192. The active-site Proton acceptor is the H235. E237 is an active-site residue. R249 lines the substrate pocket.

The protein belongs to the MetA family.

It is found in the cytoplasm. The enzyme catalyses L-homoserine + succinyl-CoA = O-succinyl-L-homoserine + CoA. The protein operates within amino-acid biosynthesis; L-methionine biosynthesis via de novo pathway; O-succinyl-L-homoserine from L-homoserine: step 1/1. Functionally, transfers a succinyl group from succinyl-CoA to L-homoserine, forming succinyl-L-homoserine. This chain is Homoserine O-succinyltransferase, found in Shewanella amazonensis (strain ATCC BAA-1098 / SB2B).